The following is a 462-amino-acid chain: Argininosuccinate lyase (462 aa).

The protein belongs to the lyase 1 family. Argininosuccinate lyase subfamily.

It localises to the cytoplasm. It catalyses the reaction 2-(N(omega)-L-arginino)succinate = fumarate + L-arginine. Its pathway is amino-acid biosynthesis; L-arginine biosynthesis; L-arginine from L-ornithine and carbamoyl phosphate: step 3/3. In Bacillus cereus (strain ATCC 14579 / DSM 31 / CCUG 7414 / JCM 2152 / NBRC 15305 / NCIMB 9373 / NCTC 2599 / NRRL B-3711), this protein is Argininosuccinate lyase.